The following is a 433-amino-acid chain: Glutamate-1-semialdehyde 2,1-aminomutase (433 aa).

Position 273 is an N6-(pyridoxal phosphate)lysine (Lys-273).

This sequence belongs to the class-III pyridoxal-phosphate-dependent aminotransferase family. HemL subfamily. Homodimer. The cofactor is pyridoxal 5'-phosphate.

The protein resides in the cytoplasm. It catalyses the reaction (S)-4-amino-5-oxopentanoate = 5-aminolevulinate. It functions in the pathway porphyrin-containing compound metabolism; protoporphyrin-IX biosynthesis; 5-aminolevulinate from L-glutamyl-tRNA(Glu): step 2/2. The protein operates within porphyrin-containing compound metabolism; chlorophyll biosynthesis. The chain is Glutamate-1-semialdehyde 2,1-aminomutase (hemL) from Synechocystis sp. (strain ATCC 27184 / PCC 6803 / Kazusa).